A 611-amino-acid polypeptide reads, in one-letter code: Chaperone protein DnaK (611 aa).

Position 173 is a phosphothreonine; by autocatalysis (Thr173). Disordered regions lie at residues 525–548 (DNIS…ALEG) and 573–611 (YQQA…EDKK). Over residues 529-542 (EEDKSNAESKKDAL) the composition is skewed to basic and acidic residues. A compositionally biased stretch (low complexity) spans 574-591 (QQAQQAQQQAQDGAQQTQ). The span at 599-611 (AEFKEVNDDEDKK) shows a compositional bias: basic and acidic residues.

It belongs to the heat shock protein 70 family.

In terms of biological role, acts as a chaperone. The protein is Chaperone protein DnaK of Staphylococcus haemolyticus (strain JCSC1435).